The sequence spans 158 residues: Deoxyuridine 5'-triphosphate nucleotidohydrolase (158 aa).

Substrate-binding positions include 75 to 77 (RSG), asparagine 88, 92 to 94 (TVD), and lysine 102.

It belongs to the dUTPase family. It depends on Mg(2+) as a cofactor.

The enzyme catalyses dUTP + H2O = dUMP + diphosphate + H(+). It participates in pyrimidine metabolism; dUMP biosynthesis; dUMP from dCTP (dUTP route): step 2/2. This enzyme is involved in nucleotide metabolism: it produces dUMP, the immediate precursor of thymidine nucleotides and it decreases the intracellular concentration of dUTP so that uracil cannot be incorporated into DNA. The protein is Deoxyuridine 5'-triphosphate nucleotidohydrolase of Bifidobacterium longum (strain DJO10A).